The primary structure comprises 2318 residues: MGLGARGRRRRRRLMALPPPPPPMRALPLLLLLAGLGAAAPPCLDGSPCANGGRCTHQQPSLEAACLCLPGWVGERCQLEDPCHSGPCAGRGVCQSSVVAGTARFSCRCLRGFQGPDCSQPDPCVSRPCVHGAPCSVGPDGRFACACPPGYQGQSCQSDIDECRSGTTCRHGGTCLNTPGSFRCQCPLGYTGLLCENPVVPCAPSPCRNGGTCRQSSDVTYDCACLPGFEGQNCEVNVDDCPGHRCLNGGTCVDGVNTYNCQCPPEWTGQFCTEDVDECQLQPNACHNGGTCFNLLGGHSCVCVNGWTGESCSQNIDDCATAVCFHGATCHDRVASFYCACPMGKTGLLCHLDDACVSNPCHEDAICDTNPVSGRAICTCPPGFTGGACDQDVDECSIGANPCEHLGRCVNTQGSFLCQCGRGYTGPRCETDVNECLSGPCRNQATCLDRIGQFTCICMAGFTGTYCEVDIDECQSSPCVNGGVCKDRVNGFSCTCPSGFSGSMCQLDVDECASTPCRNGAKCVDQPDGYECRCAEGFEGTLCERNVDDCSPDPCHHGRCVDGIASFSCACAPGYTGIRCESQVDECRSQPCRYGGKCLDLVDKYLCRCPPGTTGVNCEVNIDDCASNPCTFGVCRDGINRYDCVCQPGFTGPLCNVEINECASSPCGEGGSCVDGENGFHCLCPPGSLPPLCLPANHPCAHKPCSHGVCHDAPGGFRCVCEPGWSGPRCSQSLAPDACESQPCQAGGTCTSDGIGFRCTCAPGFQGHQCEVLSPCTPSLCEHGGHCESDPDRLTVCSCPPGWQGPRCQQDVDECAGASPCGPHGTCTNLPGNFRCICHRGYTGPFCDQDIDDCDPNPCLHGGSCQDGVGSFSCSCLDGFAGPRCARDVDECLSSPCGPGTCTDHVASFTCACPPGYGGFHCEIDLPDCSPSSCFNGGTCVDGVSSFSCLCRPGYTGTHCQYEADPCFSRPCLHGGICNPTHPGFECTCREGFTGSQCQNPVDWCSQAPCQNGGRCVQTGAYCICPPGWSGRLCDIQSLPCTEAAAQMGVRLEQLCQEGGKCIDKGRSHYCVCPEGRTGSHCEHEVDPCTAQPCQHGGTCRGYMGGYVCECPAGYAGDSCEDNIDECASQPCQNGGSCIDLVARYLCSCPPGTLGVLCEINEDDCDLGPSLDSGVQCLHNGTCVDLVGGFRCNCPPGYTGLHCEADINECRPGACHAAHTRDCLQDPGGHFRCVCHPGFTGPRCQIALSPCESQPCQHGGQCRHSLGRGGGLTFTCHCVPPFWGLRCERVARSCRELQCPVGIPCQQTARGPRCACPPGLSGPSCRVSRASPSGATNASCASAPCLHGGSCLPVQSVPFFRCVCAPGWGGPRCETPSAAPEVPEEPRCPRAACQAKRGDQNCDRECNTPGCGWDGGDCSLNVDDPWRQCEALQCWRLFNNSRCDPACSSPACLYDNFDCYSGGRDRTCNPVYEKYCADHFADGRCDQGCNTEECGWDGLDCASEVPALLARGVLVLTVLLPPEELLRSSADFLQRLSAILRTSLRFRLDARGQAMVFPYHRPSPGSESRVRRELGPEVIGSVVMLEIDNRLCLQSAENDHCFPDAQSAADYLGALSAVERLDFPYPLRDVRGEPLEAPEQSVPLLPLLVAGAVFLLIIFILGVMVARRKREHSTLWFPEGFALHKDIAAGHKGRREPVGQDALGMKNMAKGESLMGEVVTDLNDSECPEAKRLKVEEPGMGAEEPEDCRQWTQHHLVAADIRVAPATALTPPQGDADADGVDVNVRGPDGFTPLMLASFCGGALEPMPAEEDEADDTSASIISDLICQGAQLGARTDRTGETALHLAARYARADAAKRLLDAGADTNAQDHSGRTPLHTAVTADAQGVFQILIRNRSTDLDARMADGSTALILAARLAVEGMVEELIASHADVNAVDELGKSALHWAAAVNNVEATLALLKNGANKDMQDSKEETPLFLAAREGSYEAAKLLLDHLANREITDHLDRLPRDVAQERLHQDIVRLLDQPSGPRSPSGPHGLGPLLCPPGAFLPGLKAVQSGTKKSRRPPGKTGLGPQGTRGRGKKLTLACPGPLADSSVTLSPVDSLDSPRPFSGPPASPGGFPLEGPYATTATAVSLAQLGASRAGPLGRQPPGGCVLSFGLLNPVAVPLDWARLPPPAPPGPSFLLPLAPGPQLLNPGAPVSPQERPPPYLAAPGHGEEYPAAGTRSSPTKARFLRVPSEHPYLTPSPESPEHWASPSPPSLSDWSDSTPSPATATNATASGALPAQPHPISVPSLPQSQTQLGPQPEVTPKRQVMA.

A compositionally biased stretch (basic residues) spans 1-14 (MGLGARGRRRRRRL). Positions 1-20 (MGLGARGRRRRRRLMALPPP) are disordered. Positions 1 to 39 (MGLGARGRRRRRRLMALPPPPPPMRALPLLLLLAGLGAA) are cleaved as a signal peptide. 3 consecutive EGF-like domains span residues 40–78 (APPCLDGSPCANGGRCTHQQPSLEAACLCLPGWVGERCQ), 79–119 (LEDP…PDCS), and 120–157 (QPDPCVSRPCVHGAPCSVGPDGRFACACPPGYQGQSCQ). At 40–1643 (APPCLDGSPC…PLEAPEQSVP (1604 aa)) the chain is on the extracellular side. Disulfide bonds link Cys-43-Cys-55, Cys-49-Cys-66, Cys-68-Cys-77, Cys-83-Cys-94, Cys-88-Cys-107, Cys-109-Cys-118, Cys-124-Cys-135, Cys-129-Cys-145, Cys-147-Cys-156, Cys-163-Cys-175, Cys-169-Cys-184, Cys-186-Cys-195, Cys-202-Cys-213, Cys-207-Cys-223, Cys-225-Cys-234, Cys-241-Cys-252, Cys-246-Cys-261, Cys-263-Cys-272, Cys-279-Cys-292, Cys-286-Cys-301, Cys-303-Cys-312, Cys-319-Cys-330, Cys-324-Cys-339, Cys-341-Cys-350, Cys-356-Cys-367, Cys-361-Cys-378, Cys-380-Cys-389, Cys-396-Cys-409, Cys-403-Cys-418, Cys-420-Cys-429, Cys-436-Cys-447, Cys-441-Cys-456, Cys-458-Cys-467, Cys-474-Cys-485, Cys-479-Cys-494, Cys-496-Cys-505, Cys-512-Cys-523, Cys-517-Cys-532, Cys-534-Cys-543, Cys-550-Cys-560, Cys-555-Cys-569, Cys-571-Cys-580, Cys-587-Cys-598, Cys-592-Cys-607, Cys-609-Cys-618, Cys-625-Cys-635, Cys-630-Cys-644, Cys-646-Cys-655, Cys-662-Cys-673, Cys-667-Cys-682, Cys-684-Cys-693, Cys-700-Cys-710, Cys-705-Cys-719, Cys-721-Cys-730, Cys-739-Cys-750, Cys-744-Cys-759, Cys-761-Cys-770, Cys-776-Cys-787, Cys-781-Cys-797, Cys-799-Cys-808, Cys-815-Cys-827, Cys-821-Cys-836, Cys-838-Cys-847, Cys-854-Cys-865, Cys-859-Cys-874, Cys-876-Cys-885, Cys-892-Cys-902, Cys-897-Cys-911, Cys-913-Cys-922, Cys-929-Cys-940, Cys-934-Cys-949, Cys-951-Cys-960, Cys-967-Cys-978, Cys-972-Cys-987, Cys-989-Cys-998, Cys-1005-Cys-1016, Cys-1010-Cys-1023, Cys-1025-Cys-1034, Cys-1041-Cys-1062, Cys-1056-Cys-1071, Cys-1073-Cys-1082, Cys-1089-Cys-1100, Cys-1094-Cys-1109, Cys-1111-Cys-1120, Cys-1127-Cys-1138, Cys-1132-Cys-1147, Cys-1149-Cys-1158, Cys-1165-Cys-1183, Cys-1177-Cys-1192, Cys-1194-Cys-1203, Cys-1210-Cys-1223, Cys-1215-Cys-1233, Cys-1235-Cys-1244, Cys-1251-Cys-1262, Cys-1256-Cys-1276, Cys-1278-Cys-1287, Cys-1294-Cys-1305, Cys-1299-Cys-1314, and Cys-1316-Cys-1325. The region spanning 159–196 (DIDECRSGTTCRHGGTCLNTPGSFRCQCPLGYTGLLCE) is the EGF-like 4; calcium-binding domain. Residues 198–235 (PVVPCAPSPCRNGGTCRQSSDVTYDCACLPGFEGQNCE) form the EGF-like 5 domain. Residues 237 to 273 (NVDDCPGHRCLNGGTCVDGVNTYNCQCPPEWTGQFCT) form the EGF-like 6; calcium-binding domain. The region spanning 275–313 (DVDECQLQPNACHNGGTCFNLLGGHSCVCVNGWTGESCS) is the EGF-like 7 domain. Residues 315-351 (NIDDCATAVCFHGATCHDRVASFYCACPMGKTGLLCH) enclose the EGF-like 8; calcium-binding domain. The EGF-like 9 domain occupies 352-390 (LDDACVSNPCHEDAICDTNPVSGRAICTCPPGFTGGACD). One can recognise an EGF-like 10; calcium-binding domain in the interval 392–430 (DVDECSIGANPCEHLGRCVNTQGSFLCQCGRGYTGPRCE). One can recognise an EGF-like 11; calcium-binding domain in the interval 432–468 (DVNECLSGPCRNQATCLDRIGQFTCICMAGFTGTYCE). The EGF-like 12; calcium-binding domain maps to 470 to 506 (DIDECQSSPCVNGGVCKDRVNGFSCTCPSGFSGSMCQ). The region spanning 508–544 (DVDECASTPCRNGAKCVDQPDGYECRCAEGFEGTLCE) is the EGF-like 13; calcium-binding domain. The EGF-like 14; calcium-binding domain maps to 546 to 581 (NVDDCSPDPCHHGRCVDGIASFSCACAPGYTGIRCE). In terms of domain architecture, EGF-like 15; calcium-binding spans 583–619 (QVDECRSQPCRYGGKCLDLVDKYLCRCPPGTTGVNCE). In terms of domain architecture, EGF-like 16; calcium-binding spans 621-656 (NIDDCASNPCTFGVCRDGINRYDCVCQPGFTGPLCN). The 37-residue stretch at 658–694 (EINECASSPCGEGGSCVDGENGFHCLCPPGSLPPLCL) folds into the EGF-like 17; calcium-binding domain. EGF-like domains lie at 696–731 (ANHPCAHKPCSHGVCHDAPGGFRCVCEPGWSGPRCS), 735–771 (APDACESQPCQAGGTCTSDGIGFRCTCAPGFQGHQCE), and 772–809 (VLSPCTPSLCEHGGHCESDPDRLTVCSCPPGWQGPRCQ). One can recognise an EGF-like 21; calcium-binding domain in the interval 811 to 848 (DVDECAGASPCGPHGTCTNLPGNFRCICHRGYTGPFCD). In terms of domain architecture, EGF-like 22; calcium-binding spans 850-886 (DIDDCDPNPCLHGGSCQDGVGSFSCSCLDGFAGPRCA). Positions 888–923 (DVDECLSSPCGPGTCTDHVASFTCACPPGYGGFHCE) constitute an EGF-like 23; calcium-binding domain. EGF-like domains are found at residues 925 to 961 (DLPDCSPSSCFNGGTCVDGVSSFSCLCRPGYTGTHCQ), 963 to 999 (EADPCFSRPCLHGGICNPTHPGFECTCREGFTGSQCQ), 1001 to 1035 (PVDWCSQAPCQNGGRCVQTGAYCICPPGWSGRLCD), 1037 to 1083 (QSLP…SHCE), and 1085 to 1121 (EVDPCTAQPCQHGGTCRGYMGGYVCECPAGYAGDSCE). Residues 1123–1159 (NIDECASQPCQNGGSCIDLVARYLCSCPPGTLGVLCE) form the EGF-like 29; calcium-binding domain. The EGF-like 30; calcium-binding domain occupies 1161 to 1204 (NEDDCDLGPSLDSGVQCLHNGTCVDLVGGFRCNCPPGYTGLHCE). N-linked (GlcNAc...) asparagine glycosylation is present at Asn-1180. EGF-like domains follow at residues 1206–1245 (DINECRPGACHAAHTRDCLQDPGGHFRCVCHPGFTGPRCQ), 1247–1288 (ALSP…LRCE), 1290–1326 (VARSCRELQCPVGIPCQQTARGPRCACPPGLSGPSCR), and 1336–1374 (TNASCASAPCLHGGSCLPVQSVPFFRCVCAPGWGGPRCE). N-linked (GlcNAc...) asparagine glycosylation occurs at Asn-1337. 12 disulfides stabilise this stretch: Cys-1340-Cys-1351, Cys-1345-Cys-1362, Cys-1364-Cys-1373, Cys-1388-Cys-1411, Cys-1393-Cys-1406, Cys-1402-Cys-1418, Cys-1429-Cys-1452, Cys-1434-Cys-1447, Cys-1443-Cys-1459, Cys-1468-Cys-1494, Cys-1476-Cys-1489, and Cys-1485-Cys-1501. LNR repeat units follow at residues 1388–1428 (CPRA…PWRQ), 1429–1466 (CEALQCWRLFNNSRCDPACSSPACLYDNFDCYSGGRDR), and 1468–1506 (CNPVYEKYCADHFADGRCDQGCNTEECGWDGLDCASEVP). N-linked (GlcNAc...) asparagine glycosylation is present at Asn-1439. Residues 1644–1664 (LLPLLVAGAVFLLIIFILGVM) traverse the membrane as a helical segment. Residues 1665–2318 (VARRKREHST…EVTPKRQVMA (654 aa)) lie on the Cytoplasmic side of the membrane. ANK repeat units lie at residues 1839-1868 (TGETALHLAARYARADAAKRLLDAGADTNA), 1872-1902 (SGRTPLHTAVTADAQGVFQILIRNRSTDLDA), 1906-1935 (DGSTALILAARLAVEGMVEELIASHADVNA), 1939-1968 (LGKSALHWAAAVNNVEATLALLKNGANKDM), and 1972-2001 (KEETPLFLAAREGSYEAAKLLLDHLANREI). Disordered stretches follow at residues 2025–2045 (LDQPSGPRSPSGPHGLGPLLC) and 2058–2126 (QSGT…PLEG). The segment covering 2028–2045 (PSGPRSPSGPHGLGPLLC) has biased composition (low complexity). An Omega-N-methylarginine modification is found at Arg-2174. Residues 2184 to 2193 (SFLLPLAPGP) show a composition bias toward low complexity. Residues 2184–2318 (SFLLPLAPGP…EVTPKRQVMA (135 aa)) are disordered. Residues 2242–2261 (HPYLTPSPESPEHWASPSPP) form a PEST-like region. A compositionally biased stretch (low complexity) spans 2262–2282 (SLSDWSDSTPSPATATNATAS). A compositionally biased stretch (polar residues) spans 2296–2305 (SLPQSQTQLG).

The protein belongs to the NOTCH family. As to quaternary structure, interacts with PSMA1. Heterodimer of a C-terminal fragment N(TM) and a N-terminal fragment N(EC) which are probably linked by disulfide bonds. Interacts with MAML1, MAML2 and MAML3 which act as transcriptional coactivators for NOTCH3. Interacts with HIF1AN. Post-translationally, synthesized in the endoplasmic reticulum as an inactive form which is proteolytically cleaved by a furin-like convertase in the trans-Golgi network before it reaches the plasma membrane to yield an active, ligand-accessible form. Cleavage results in a C-terminal fragment N(TM) and a N-terminal fragment N(EC). Following ligand binding, it is cleaved by TNF-alpha converting enzyme (TACE) to yield a membrane-associated intermediate fragment called notch extracellular truncation (NEXT). This fragment is then cleaved by presenilin dependent gamma-secretase to release a notch-derived peptide containing the intracellular domain (NICD) from the membrane. In terms of processing, phosphorylated. Hydroxylated by HIF1AN. Proliferating neuroepithelium.

The protein localises to the cell membrane. Its subcellular location is the nucleus. In terms of biological role, functions as a receptor for membrane-bound ligands Jagged1, Jagged2 and Delta1 to regulate cell-fate determination. Upon ligand activation through the released notch intracellular domain (NICD) it forms a transcriptional activator complex with RBPJ/RBPSUH and activates genes of the enhancer of split locus. Affects the implementation of differentiation, proliferation and apoptotic programs. May play a role during CNS development. The polypeptide is Neurogenic locus notch homolog protein 3 (Notch3) (Mus musculus (Mouse)).